The chain runs to 307 residues: tRNA pseudouridine synthase B (307 aa).

Residue Asp-48 is the Nucleophile of the active site.

This sequence belongs to the pseudouridine synthase TruB family. Type 1 subfamily.

It carries out the reaction uridine(55) in tRNA = pseudouridine(55) in tRNA. In terms of biological role, responsible for synthesis of pseudouridine from uracil-55 in the psi GC loop of transfer RNAs. The chain is tRNA pseudouridine synthase B from Neisseria meningitidis serogroup B (strain ATCC BAA-335 / MC58).